The following is a 137-amino-acid chain: ATP synthase epsilon chain (137 aa).

This sequence belongs to the ATPase epsilon chain family. In terms of assembly, F-type ATPases have 2 components, CF(1) - the catalytic core - and CF(0) - the membrane proton channel. CF(1) has five subunits: alpha(3), beta(3), gamma(1), delta(1), epsilon(1). CF(0) has three main subunits: a, b and c.

The protein resides in the cell membrane. Produces ATP from ADP in the presence of a proton gradient across the membrane. In Streptococcus agalactiae serotype Ia (strain ATCC 27591 / A909 / CDC SS700), this protein is ATP synthase epsilon chain.